The chain runs to 564 residues: Urease subunit alpha (564 aa).

One can recognise a Urease domain in the interval glycine 126–phenylalanine 564. The Ni(2+) site is built by histidine 131, histidine 133, and lysine 214. Position 214 is an N6-carboxylysine (lysine 214). Residue histidine 216 coordinates substrate. Residues histidine 243 and histidine 269 each contribute to the Ni(2+) site. Histidine 317 (proton donor) is an active-site residue. Aspartate 357 serves as a coordination point for Ni(2+).

It belongs to the metallo-dependent hydrolases superfamily. Urease alpha subunit family. In terms of assembly, heterotrimer of UreA (gamma), UreB (beta) and UreC (alpha) subunits. Three heterotrimers associate to form the active enzyme. The cofactor is Ni cation. In terms of processing, carboxylation allows a single lysine to coordinate two nickel ions.

The protein localises to the cytoplasm. The catalysed reaction is urea + 2 H2O + H(+) = hydrogencarbonate + 2 NH4(+). It participates in nitrogen metabolism; urea degradation; CO(2) and NH(3) from urea (urease route): step 1/1. The chain is Urease subunit alpha from Burkholderia pseudomallei (strain 1710b).